A 763-amino-acid chain; its full sequence is Xaa-Pro dipeptidyl-peptidase (763 aa).

Active-site charge relay system residues include Ser348, Asp468, and His498.

This sequence belongs to the peptidase S15 family. As to quaternary structure, homodimer.

Its subcellular location is the cytoplasm. It carries out the reaction Hydrolyzes Xaa-Pro-|- bonds to release unblocked, N-terminal dipeptides from substrates including Ala-Pro-|-p-nitroanilide and (sequentially) Tyr-Pro-|-Phe-Pro-|-Gly-Pro-|-Ile.. Its function is as follows. Removes N-terminal dipeptides sequentially from polypeptides having unsubstituted N-termini provided that the penultimate residue is proline. This is Xaa-Pro dipeptidyl-peptidase (pepX) from Lactococcus lactis subsp. lactis (strain IL1403) (Streptococcus lactis).